The primary structure comprises 142 residues: Small ribosomal subunit protein uS9 (142 aa).

It belongs to the universal ribosomal protein uS9 family.

In Debaryomyces hansenii (strain ATCC 36239 / CBS 767 / BCRC 21394 / JCM 1990 / NBRC 0083 / IGC 2968) (Yeast), this protein is Small ribosomal subunit protein uS9 (RPS16).